Reading from the N-terminus, the 628-residue chain is tRNA uridine 5-carboxymethylaminomethyl modification enzyme MnmG (628 aa).

FAD-binding positions include 14-19 (GAGHAG), Val126, and Ser181. 273-287 (GPRYCPSIEDKVVRF) contributes to the NAD(+) binding site. Gln370 contributes to the FAD binding site.

Belongs to the MnmG family. In terms of assembly, homodimer. Heterotetramer of two MnmE and two MnmG subunits. FAD serves as cofactor.

The protein resides in the cytoplasm. NAD-binding protein involved in the addition of a carboxymethylaminomethyl (cmnm) group at the wobble position (U34) of certain tRNAs, forming tRNA-cmnm(5)s(2)U34. In Pelobacter propionicus (strain DSM 2379 / NBRC 103807 / OttBd1), this protein is tRNA uridine 5-carboxymethylaminomethyl modification enzyme MnmG.